We begin with the raw amino-acid sequence, 56 residues long: Hydrophobic protein LTI6A (56 aa).

Transmembrane regions (helical) follow at residues 11 to 31 (IILAIILPPLGVFFKFGCGIE) and 34 to 54 (ICLLLTFFGYLPGIIYAVWVI).

The protein belongs to the UPF0057 (PMP3) family. In terms of tissue distribution, expressed in shoot of cold stressed seedlings.

Its subcellular location is the membrane. Its function is as follows. Plays a role in the regulation of membrane potential. Could mediate a proton leak. This is Hydrophobic protein LTI6A (LTI6A) from Oryza sativa subsp. japonica (Rice).